Consider the following 384-residue polypeptide: MAKHLFTSESVSEGHPDKIADQISDAVLDAILQQDPKARVACETYVKTGMVLVGGEITTSAWVDIEEITRNTVREIGYVHSDMGFDANSCAVLSAIGKQSPDINQGVDRSDLLEQGAGDQGLMFGYATNETDVLMPAPITYAHRLVQRQAEVRKNGTLPWLRPDAKSQVTFQYDDGKIVGIDAVVLSTQHAEDIDQKSLQEAVMEEIIKPILPSEWLNTSTKFFINPTGRFVIGGPMGDCGLTGRKIIVDTYGGMARHGGGAFSGKDPSKVDRSAAYAARYVAKNIVAAGLADRCEIQVSYAIGVAEPTSIMVETFGTEKVPAEQLILLVREFFDLRPYGLIQMLDLLHPIYKETAAYGHFGRENFPWEKTDKAQLLRDAAGLK.

An ATP-binding site is contributed by histidine 15. Aspartate 17 contacts Mg(2+). Position 43 (glutamate 43) interacts with K(+). L-methionine is bound by residues glutamate 56 and glutamine 99. The tract at residues 99–109 is flexible loop; that stretch reads QSPDINQGVDR. Residues 164-166, 230-231, aspartate 239, 245-246, alanine 262, and lysine 266 each bind ATP; these read DAK, RF, and RK. Aspartate 239 provides a ligand contact to L-methionine. Lysine 270 contributes to the L-methionine binding site.

It belongs to the AdoMet synthase family. Homotetramer; dimer of dimers. It depends on Mg(2+) as a cofactor. K(+) serves as cofactor.

The protein resides in the cytoplasm. It carries out the reaction L-methionine + ATP + H2O = S-adenosyl-L-methionine + phosphate + diphosphate. The protein operates within amino-acid biosynthesis; S-adenosyl-L-methionine biosynthesis; S-adenosyl-L-methionine from L-methionine: step 1/1. Catalyzes the formation of S-adenosylmethionine (AdoMet) from methionine and ATP. The overall synthetic reaction is composed of two sequential steps, AdoMet formation and the subsequent tripolyphosphate hydrolysis which occurs prior to release of AdoMet from the enzyme. This is S-adenosylmethionine synthase from Salmonella gallinarum (strain 287/91 / NCTC 13346).